Reading from the N-terminus, the 291-residue chain is Nucleotide-binding protein jk1004 (291 aa).

16–23 serves as a coordination point for ATP; the sequence is GMSGAGRR. GTP is bound at residue 67 to 70; that stretch reads DVRS.

The protein belongs to the RapZ-like family.

Displays ATPase and GTPase activities. In Corynebacterium jeikeium (strain K411), this protein is Nucleotide-binding protein jk1004.